The chain runs to 334 residues: Protein-methionine-sulfoxide reductase catalytic subunit MsrP (334 aa).

Positions 1–44 form a signal peptide, tat-type signal; that stretch reads MKKNQFLKESDITAESVFFMKRRQVLKALGISAAALSLPHAAHA. Mo-molybdopterin is bound by residues Asn-88, 91–92, Cys-146, Thr-181, Asn-233, Arg-238, and 249–251; these read YE and GIK.

This sequence belongs to the MsrP family. In terms of assembly, heterodimer of a catalytic subunit (MsrP) and a heme-binding subunit (MsrQ). The cofactor is Mo-molybdopterin. Post-translationally, predicted to be exported by the Tat system. The position of the signal peptide cleavage has not been experimentally proven.

It localises to the periplasm. It catalyses the reaction L-methionyl-[protein] + a quinone + H2O = L-methionyl-(S)-S-oxide-[protein] + a quinol. The catalysed reaction is L-methionyl-[protein] + a quinone + H2O = L-methionyl-(R)-S-oxide-[protein] + a quinol. Its function is as follows. Part of the MsrPQ system that repairs oxidized periplasmic proteins containing methionine sulfoxide residues (Met-O), using respiratory chain electrons. Thus protects these proteins from oxidative-stress damage caused by reactive species of oxygen and chlorine generated by the host defense mechanisms. MsrPQ is essential for the maintenance of envelope integrity under bleach stress, rescuing a wide series of structurally unrelated periplasmic proteins from methionine oxidation, including the primary periplasmic chaperone SurA and the lipoprotein Pal. The catalytic subunit MsrP is non-stereospecific, being able to reduce both (R-) and (S-) diastereoisomers of methionine sulfoxide. This Shigella dysenteriae serotype 1 (strain Sd197) protein is Protein-methionine-sulfoxide reductase catalytic subunit MsrP.